Here is a 211-residue protein sequence, read N- to C-terminus: Redox-sensing transcriptional repressor Rex (211 aa).

A DNA-binding region (H-T-H motif) is located at residues 18-57 (LYYRFLKNLHASGKQRVSSAELSEAVKVDSATIRRDFSYF). Residue 92–97 (GVGNLG) coordinates NAD(+).

It belongs to the transcriptional regulatory Rex family. As to quaternary structure, homodimer.

The protein localises to the cytoplasm. Modulates transcription in response to changes in cellular NADH/NAD(+) redox state. The sequence is that of Redox-sensing transcriptional repressor Rex from Anoxybacillus flavithermus (strain DSM 21510 / WK1).